A 329-amino-acid polypeptide reads, in one-letter code: Biotin synthase (329 aa).

The region spanning 48-278 is the Radical SAM core domain; that stretch reads FLGNGVDLCS…TKKIAVCGGR (231 aa). Cys66, Cys70, and Cys73 together coordinate [4Fe-4S] cluster. Positions 143 and 203 each coordinate [2Fe-2S] cluster.

Belongs to the radical SAM superfamily. Biotin synthase family. In terms of assembly, homodimer. Requires [4Fe-4S] cluster as cofactor. The cofactor is [2Fe-2S] cluster.

The catalysed reaction is (4R,5S)-dethiobiotin + (sulfur carrier)-SH + 2 reduced [2Fe-2S]-[ferredoxin] + 2 S-adenosyl-L-methionine = (sulfur carrier)-H + biotin + 2 5'-deoxyadenosine + 2 L-methionine + 2 oxidized [2Fe-2S]-[ferredoxin]. It functions in the pathway cofactor biosynthesis; biotin biosynthesis; biotin from 7,8-diaminononanoate: step 2/2. Functionally, catalyzes the conversion of dethiobiotin (DTB) to biotin by the insertion of a sulfur atom into dethiobiotin via a radical-based mechanism. The chain is Biotin synthase from Geobacter metallireducens (strain ATCC 53774 / DSM 7210 / GS-15).